The following is a 267-amino-acid chain: 3-isopropylmalate dehydratase large subunit (267 aa).

Cysteine 146, cysteine 206, and cysteine 209 together coordinate [4Fe-4S] cluster.

It belongs to the aconitase/IPM isomerase family. LeuC type 1 subfamily. Heterodimer of LeuC and LeuD. [4Fe-4S] cluster serves as cofactor.

The enzyme catalyses (2R,3S)-3-isopropylmalate = (2S)-2-isopropylmalate. It participates in amino-acid biosynthesis; L-leucine biosynthesis; L-leucine from 3-methyl-2-oxobutanoate: step 2/4. Its function is as follows. Catalyzes the isomerization between 2-isopropylmalate and 3-isopropylmalate, via the formation of 2-isopropylmaleate. The protein is 3-isopropylmalate dehydratase large subunit (leuC) of Cupriavidus necator (Alcaligenes eutrophus).